Reading from the N-terminus, the 505-residue chain is Glutamate--tRNA ligase (505 aa).

The 'HIGH' region motif lies at 16 to 26 (PSPTGFPHVGT). The short motif at 257–261 (KLSKR) is the 'KMSKS' region element. Lys260 contributes to the ATP binding site.

It belongs to the class-I aminoacyl-tRNA synthetase family. Glutamate--tRNA ligase type 1 subfamily. As to quaternary structure, monomer.

The protein resides in the cytoplasm. The catalysed reaction is tRNA(Glu) + L-glutamate + ATP = L-glutamyl-tRNA(Glu) + AMP + diphosphate. Catalyzes the attachment of glutamate to tRNA(Glu) in a two-step reaction: glutamate is first activated by ATP to form Glu-AMP and then transferred to the acceptor end of tRNA(Glu). The polypeptide is Glutamate--tRNA ligase (Psychrobacter sp. (strain PRwf-1)).